We begin with the raw amino-acid sequence, 434 residues long: Protein POLLENLESS 3 (434 aa).

A disordered region spans residues 13–47 (VYYTPPPARTSDHVAAMPMTERRRPPYSCSSSSER). Positions 34–37 (RRRP) match the Nuclear localization signal 1 motif. 4 TPR repeats span residues 95–131 (DSAL…ESQD), 133–164 (IDNL…LEQG), 191–224 (ARIL…ERDK), and 241–274 (PEAK…AVEM). A coiled-coil region spans residues 142–166 (KKSGRIEEEAVLLEHKLQTLEQGMG). Residues 309–329 (TANKNYSDVSSSPASVRPNSA) form a disordered region. Over residues 310–326 (ANKNYSDVSSSPASVRP) the composition is skewed to polar residues. Positions 377 to 380 (KRKK) match the Nuclear localization signal 2 motif. A compositionally biased stretch (basic and acidic residues) spans 393–408 (VKDTADGPKSESKKSW). Residues 393-434 (VKDTADGPKSESKKSWADIAEEEEAEEEEEERLQGELKTAEM) form a disordered region. Positions 408-434 (WADIAEEEEAEEEEEERLQGELKTAEM) form a coiled coil. A compositionally biased stretch (acidic residues) spans 411–423 (IAEEEEAEEEEEE). A compositionally biased stretch (basic and acidic residues) spans 424 to 434 (RLQGELKTAEM).

It belongs to the MS5 protein family. Expressed at low levels mostly in floral organs during meiosis. Also barely detectable in leaves, stems and roots.

Its subcellular location is the nucleus. Essential for male fertility, especially for microspore and pollen grain production. Involved in the regulation of cell division after male meiosis I and II to facilitate exit from meiosis and transition to G1. This chain is Protein POLLENLESS 3, found in Arabidopsis thaliana (Mouse-ear cress).